The sequence spans 201 residues: Recombination protein RecR (201 aa).

The C4-type zinc-finger motif lies at 60-75 (CTSCGNVDTSDPCTIC). Residues 83–178 (TTLVVVEDVS…KVTRLAHGVP (96 aa)) form the Toprim domain.

It belongs to the RecR family.

Functionally, may play a role in DNA repair. It seems to be involved in an RecBC-independent recombinational process of DNA repair. It may act with RecF and RecO. The polypeptide is Recombination protein RecR (Methylobacterium radiotolerans (strain ATCC 27329 / DSM 1819 / JCM 2831 / NBRC 15690 / NCIMB 10815 / 0-1)).